A 335-amino-acid polypeptide reads, in one-letter code: ETS translocation variant 2 (335 aa).

2 disordered regions span residues 94 to 138 and 201 to 220; these read DPWS…SWSH and GHQSPAFTTPSKSNKQSDRA. Residues 205–220 show a composition bias toward polar residues; that stretch reads PAFTTPSKSNKQSDRA. Positions 234–314 form a DNA-binding region, ETS; that stretch reads IQLWQFLLEL…GGRKYTYRFG (81 aa).

Belongs to the ETS family. In terms of tissue distribution, testis.

Its subcellular location is the nucleus. Its function is as follows. Binds to DNA sequences containing the consensus pentanucleotide 5'-CGGA[AT]-3'. This Mus musculus (Mouse) protein is ETS translocation variant 2 (Etv2).